Here is a 640-residue protein sequence, read N- to C-terminus: F-box protein MET30 (640 aa).

Residues 1–19 show a composition bias toward basic and acidic residues; that stretch reads MRRERQRMMSFEDKDKDDL. Positions 1 to 84 are disordered; the sequence is MRRERQRMMS…ATNDSGTRVQ (84 aa). Residues 1 to 299 form a necessary to mediate nuclear localization region; sequence MRRERQRMMS…KGHCRIQEFK (299 aa). Composition is skewed to polar residues over residues 45–56 and 64–82; these read TGSSDDLAQGSS and ATRSPSSSPDLATNDSGTR. The residue at position 67 (Ser-67) is a Phosphoserine. The interval 180–225 is interaction with SKP1/CBF3D; that stretch reads KIDFISILPQELSLKILSYLDCQSLCNATRVCRKWQKLADDDRVWY. The interval 180-277 is important for mediating homomultimerization; it reads KIDFISILPQ…TQTTRPWKVI (98 aa). Residues 181 to 227 enclose the F-box domain; sequence IDFISILPQELSLKILSYLDCQSLCNATRVCRKWQKLADDDRVWYHM. Positions 277 to 640 are interaction with MET4; sequence IYRERFKVES…VKMYKFDLND (364 aa). 8 WD repeats span residues 300–328, 340–368, 380–408, 419–449, 461–499, 509–538, 550–578, and 607–635; these read GHMDGVLTLQFNYRLLFTGSYDSTIGIWD, GHSDGVKTLYFDDRKLITGSLDKTIRVWN, GHSDSVLSVDSYQKVIVSGSADKTVKVWH, GHTEWVNCVKLHPKSFSCFSCSDDTTIRMWD, GHVGQVQKIIPLTIKDVENLATDNTSDGSSPQDDPTMTD, NEQETVLDENIPYPTHLLSCGLDNTIKLWD, GHVEGVWDIAADNFRIISGSHDGSIKVWD, and DKVAPIACVCIGDSECFSGDEFGCVKMYK. Positions 481-495 are enriched in polar residues; the sequence is ATDNTSDGSSPQDDP. The interval 481–516 is disordered; it reads ATDNTSDGSSPQDDPTMTDGADESDTPSNEQETVLD.

Belongs to the WD repeat MET30/SCONB/SCON-2 family. As to quaternary structure, homomultimer. Interacts with CDC53 and SKP1/CBF3D to form the E3 ubiquitin ligase complex SCF(Met30). Interacts with MET4.

The protein resides in the cytoplasm. The protein localises to the nucleus. The protein operates within protein modification; protein ubiquitination. In terms of biological role, substrate-recognition component of the SCF(Met30) complex, an E3 ubiquitin ligase complex that mediates the ubiquitination and subsequent proteasomal degradation of target proteins. Negatively regulates sulfur amino acids biosynthesis genes expression. Controls cell cycle function (being required for the G1/S transition and M-phase but not the S-phase), sulfur metabolism, and methionine biosynthesis as part of the SCF(Met30) complex. Required for the efficient binding of CDC45 and MCM proteins to origins of replication. Required for efficient expression of G1 cyclins. The SCF(Met30) complex catalyzes ubiquitination and degradation of the Cdk-inhibitory kinase SWE1. Involved in the S-adenosylmethionine (AdoMet)-mediated inhibition of the transcription function of MET4. The SCF(Met30) complex mediates ubiquitination and subsequent degradation of MET4 and the cellular response to cadmium. The SCF(Met30) complex acts as an inhibitor of autophagy by promoting ubiquitination and degradation of ATG9 in normal conditions. The sequence is that of F-box protein MET30 from Saccharomyces cerevisiae (strain ATCC 204508 / S288c) (Baker's yeast).